A 267-amino-acid polypeptide reads, in one-letter code: Lectin SfL-1 (267 aa).

4 tandem repeats follow at residues 1 to 67, 68 to 135, 136 to 202, and 203 to 267. Residues 1 to 267 are 4 X approximate tandem repeats; it reads GRYTVQNQWG…GPIGFKGTAI (267 aa).

As to quaternary structure, monomer.

Lectin specific for high mannose N-glycans, recognizes the branched moiety of these glycans. Does not recognize other types of N-glycans or monosaccharides. The polypeptide is Lectin SfL-1 (Solieria filiformis (Red alga)).